Consider the following 178-residue polypeptide: Phosphopantetheine adenylyltransferase (178 aa).

Substrate is bound at residue Ser8. ATP is bound by residues 8–9 (SF) and His16. The substrate site is built by Lys40, Thr72, and Arg86. Residues 87 to 89 (GLR), Glu97, and 122 to 128 (YSFLSSS) each bind ATP.

This sequence belongs to the bacterial CoaD family. As to quaternary structure, homohexamer. Requires Mg(2+) as cofactor.

It localises to the cytoplasm. The enzyme catalyses (R)-4'-phosphopantetheine + ATP + H(+) = 3'-dephospho-CoA + diphosphate. It participates in cofactor biosynthesis; coenzyme A biosynthesis; CoA from (R)-pantothenate: step 4/5. Its function is as follows. Reversibly transfers an adenylyl group from ATP to 4'-phosphopantetheine, yielding dephospho-CoA (dPCoA) and pyrophosphate. This Picosynechococcus sp. (strain ATCC 27264 / PCC 7002 / PR-6) (Agmenellum quadruplicatum) protein is Phosphopantetheine adenylyltransferase.